We begin with the raw amino-acid sequence, 476 residues long: 3-ketoacyl-CoA synthase 12 (476 aa).

Positions 1–25 (MDLLFLFFSLLLSYLFFKIWKLIDS) are cleaved as a signal peptide. The 288-residue stretch at 26-313 (KQDKDCYILD…FMLKLLIKKI (288 aa)) folds into the FAE domain. Catalysis depends on residues C168, H247, H344, H348, H377, and N381.

It belongs to the thiolase-like superfamily. Chalcone/stilbene synthases family. In terms of tissue distribution, expressed in siliques, flowers and leaves.

It is found in the endoplasmic reticulum. The enzyme catalyses a very-long-chain acyl-CoA + malonyl-CoA + H(+) = a very-long-chain 3-oxoacyl-CoA + CO2 + CoA. It participates in lipid metabolism; fatty acid biosynthesis. The chain is 3-ketoacyl-CoA synthase 12 from Arabidopsis thaliana (Mouse-ear cress).